Reading from the N-terminus, the 699-residue chain is Polyribonucleotide nucleotidyltransferase (699 aa).

Positions 487 and 493 each coordinate Mg(2+). The KH domain maps to 554 to 613 (PRMLNMKINPEKIRDVIGKGGAVIRALQEETGTVIEIEDDGSITISSVSAEGAQKAKARI). The 69-residue stretch at 623-691 (GKVYEGTVVR…ERGKIRLSMK (69 aa)) folds into the S1 motif domain.

It belongs to the polyribonucleotide nucleotidyltransferase family. It depends on Mg(2+) as a cofactor.

Its subcellular location is the cytoplasm. It carries out the reaction RNA(n+1) + phosphate = RNA(n) + a ribonucleoside 5'-diphosphate. In terms of biological role, involved in mRNA degradation. Catalyzes the phosphorolysis of single-stranded polyribonucleotides processively in the 3'- to 5'-direction. In Azoarcus sp. (strain BH72), this protein is Polyribonucleotide nucleotidyltransferase.